The following is a 187-amino-acid chain: Ribosome-recycling factor (187 aa).

This sequence belongs to the RRF family.

The protein localises to the cytoplasm. Its function is as follows. Responsible for the release of ribosomes from messenger RNA at the termination of protein biosynthesis. May increase the efficiency of translation by recycling ribosomes from one round of translation to another. The chain is Ribosome-recycling factor from Rhodopseudomonas palustris (strain BisA53).